Reading from the N-terminus, the 125-residue chain is Acidic phospholipase A2 6 (125 aa).

Ser-1 is a signal peptide. Positions 2-7 (NRPMPL) are excised as a propeptide. 7 disulfide bridges follow: Cys-18–Cys-77, Cys-33–Cys-124, Cys-35–Cys-50, Cys-49–Cys-105, Cys-56–Cys-98, Cys-66–Cys-91, and Cys-84–Cys-96. Asp-30 serves as a coordination point for Zn(2+). Residues Tyr-34 and Gly-36 each coordinate Ca(2+). His-53 is an active-site residue. Residue Asp-54 coordinates Ca(2+). Asp-99 is an active-site residue.

Heterodimer formed between isoform 5 and isoform 6 in presence of zinc ion and monomer in absence of zinc ion. Ca(2+) is required as a cofactor. In terms of tissue distribution, expressed by the venom gland.

It localises to the secreted. It catalyses the reaction a 1,2-diacyl-sn-glycero-3-phosphocholine + H2O = a 1-acyl-sn-glycero-3-phosphocholine + a fatty acid + H(+). PLA2 catalyzes the calcium-dependent hydrolysis of the 2-acyl groups in 3-sn-phosphoglycerides. The protein is Acidic phospholipase A2 6 of Naja sagittifera (Andaman cobra).